A 174-amino-acid chain; its full sequence is MSSRKTAGRRATTKKRAQRATSNVFAMFDQAQIAEFKEAFNMIDQNRDGFVEKEDLHDMLASLGKNPTDDYLDGMMNEAPGPINFTMFLTLFGERLQGTDPEDVIKNAFGCFDEENMGVLPEDRLRELLTTMGDRFTDEDVDEMYREAPIKNGLFDYLEFTRILKHGAKDKDEQ.

Position 21 is a phosphothreonine (Thr-21). At Ser-22 the chain carries Phosphoserine. EF-hand domains follow at residues 31–66 (AQIA…LGKN) and 100–135 (DPED…MGDR). The Ca(2+) site is built by Asp-44, Asn-46, Asp-48, and Asp-55.

As to quaternary structure, myosin is a hexamer of 2 heavy chains and 4 light chains. Post-translationally, phosphorylation plays a central role in myosin regulation.

Required for cytokinesis, could regulate contractile ring function. In Drosophila melanogaster (Fruit fly), this protein is Myosin regulatory light chain sqh (sqh).